A 234-amino-acid chain; its full sequence is 2-C-methyl-D-erythritol 4-phosphate cytidylyltransferase (234 aa).

It belongs to the IspD/TarI cytidylyltransferase family. IspD subfamily.

The catalysed reaction is 2-C-methyl-D-erythritol 4-phosphate + CTP + H(+) = 4-CDP-2-C-methyl-D-erythritol + diphosphate. It participates in isoprenoid biosynthesis; isopentenyl diphosphate biosynthesis via DXP pathway; isopentenyl diphosphate from 1-deoxy-D-xylulose 5-phosphate: step 2/6. Its function is as follows. Catalyzes the formation of 4-diphosphocytidyl-2-C-methyl-D-erythritol from CTP and 2-C-methyl-D-erythritol 4-phosphate (MEP). The protein is 2-C-methyl-D-erythritol 4-phosphate cytidylyltransferase of Pseudomonas aeruginosa (strain UCBPP-PA14).